We begin with the raw amino-acid sequence, 67 residues long: Large ribosomal subunit protein bL35 (67 aa).

Belongs to the bacterial ribosomal protein bL35 family.

The protein is Large ribosomal subunit protein bL35 of Leptospira interrogans serogroup Icterohaemorrhagiae serovar Lai (strain 56601).